The primary structure comprises 714 residues: Centromere/kinetochore protein zw10 (714 aa).

Belongs to the ZW10 family.

It localises to the cytoplasm. The protein resides in the nucleus. The protein localises to the chromosome. Its subcellular location is the centromere. It is found in the kinetochore. Its function is as follows. Required for accurate chromosome segregation. This Drosophila grimshawi (Hawaiian fruit fly) protein is Centromere/kinetochore protein zw10 (mit(1)15).